Consider the following 3625-residue polypeptide: Cubilin (3625 aa).

The signal sequence occupies residues 1-20 (MVNNMSLLFLWSLVIFLTFA). Positions 21–36 (ESYGEAGGPELQRHKR) are cleaved as a propeptide — removed in mature form. An interaction with AMN region spans residues 43–50 (PRMAAERG). Asn-106 is a glycosylation site (N-linked (GlcNAc...) asparagine). An EGF-like 1 domain is found at 133 to 169 (DGKVCSSNPCQNGATCLNLHDSFFCICPSQWKGPLCS). Intrachain disulfides connect Cys-137/Cys-148, Cys-142/Cys-157, Cys-159/Cys-168, Cys-175/Cys-191, Cys-185/Cys-200, and Cys-202/Cys-211. The region spanning 171–212 (DVNECEIYSGTPLGCQNGATCINTPGSYSCLCSPETHGPQCA) is the EGF-like 2; calcium-binding domain. Asn-257 carries N-linked (GlcNAc...) asparagine glycosylation. Residues 264-305 (DRDECSSWPAPCSALVPCFNTLGSFYCGACPTGWQGNGYICE) enclose the EGF-like 3; calcium-binding domain. 20 disulfide bridges follow: Cys-268–Cys-281, Cys-275–Cys-290, Cys-293–Cys-304, Cys-310–Cys-325, Cys-317–Cys-334, Cys-337–Cys-348, Cys-354–Cys-367, Cys-361–Cys-377, Cys-379–Cys-393, Cys-400–Cys-410, Cys-405–Cys-419, Cys-421–Cys-430, Cys-437–Cys-448, Cys-442–Cys-457, Cys-459–Cys-468, Cys-475–Cys-501, Cys-528–Cys-550, Cys-591–Cys-617, Cys-644–Cys-666, and Cys-709–Cys-734. The 44-residue stretch at 306-349 (DINECEINNGGCSVAPPVECVNTPGSYYCPSCPPGYQGDGRMCT) folds into the EGF-like 4; calcium-binding domain. 2 EGF-like domains span residues 350–394 (LIDL…HGCV) and 396–431 (LSNV…MNCT). The N-linked (GlcNAc...) asparagine glycan is linked to Asn-429. The region spanning 433–469 (NINECLSNPCLNGGTCVDGINAFSCECTRFWTGSLCH) is the EGF-like 7; calcium-binding domain. CUB domains lie at 475-587 (CGGT…WETR), 591-703 (CGGV…YLTT), 709-816 (CGGN…YQVA), 817-928 (CGGE…FSTE), 932-1042 (CGEI…YEAT), 1045-1163 (SAGN…WDGS), 1167-1279 (CGGN…YQQT), 1280-1391 (CDNV…WLVH), 1393-1508 (CGGE…WRAV), 1512-1621 (CGGI…FRQA), 1622-1736 (CGGH…YVAS), 1740-1852 (CGGI…FNNI), 1854-1965 (GNDH…WFAM), 1980-2093 (CGGF…FHKS), 2094-2215 (CGGY…YEAK), 2219-2336 (CGGN…YSIA), 2338-2450 (CGGT…FDSS), 2454-2567 (CGGD…YTSS), 2572-2689 (CGGS…YSFT), 2691-2803 (CGGI…WNTE), 2807-2921 (CGGI…FLSR), 2922-3037 (CGRN…YRIT), 3039-3152 (CGGT…FRET), 3159-3276 (CGGY…YTLL), 3280-3397 (CGGT…IAGC), 3397-3509 (CSRE…WTSS), and 3513-3625 (CGGT…TWAS). N-linked (GlcNAc...) asparagine glycans are attached at residues Asn-712 and Asn-749. Cys-761 and Cys-779 are disulfide-bonded. Asn-781 is a glycosylation site (N-linked (GlcNAc...) asparagine). A disulfide bond links Cys-817 and Cys-842. N-linked (GlcNAc...) asparagine glycosylation is present at Asn-857. Cystine bridges form between Cys-869–Cys-891 and Cys-932–Cys-958. N-linked (GlcNAc...) asparagine glycosylation occurs at Asn-957. Glu-980 lines the Ca(2+) pocket. An N-linked (GlcNAc...) asparagine glycan is attached at Asn-984. The cysteines at positions 985 and 1005 are disulfide-linked. Ca(2+)-binding residues include Asp-988, Asp-1027, Asp-1029, and Leu-1030. Asn-1048 carries N-linked (GlcNAc...) asparagine glycosylation. Residues Glu-1097, Asp-1107, and Asp-1148 each coordinate Ca(2+). Residues Cys-1104 and Cys-1126 are joined by a disulfide bond. A disulfide bond links Cys-1167 and Cys-1193. The N-linked (GlcNAc...) asparagine glycan is linked to Asn-1170. Position 1215 (Glu-1215) interacts with Ca(2+). Asn-1219 carries an N-linked (GlcNAc...) asparagine glycan. A disulfide bridge connects residues Cys-1220 and Cys-1242. Positions 1223, 1264, 1266, and 1267 each coordinate Ca(2+). A disulfide bond links Cys-1280 and Cys-1308. 3 N-linked (GlcNAc...) asparagine glycosylation sites follow: Asn-1287, Asn-1309, and Asn-1321. Position 1330 (Glu-1330) interacts with Ca(2+). N-linked (GlcNAc...) asparagine glycosylation is present at Asn-1334. Residues Cys-1335 and Cys-1353 are joined by a disulfide bond. Ca(2+)-binding residues include Asp-1338, Asp-1375, and Val-1377. Disulfide bonds link Cys-1393/Cys-1419 and Cys-1446/Cys-1468. Asn-1502 carries N-linked (GlcNAc...) asparagine glycosylation. Cys-1512 and Cys-1538 form a disulfide bridge. The N-linked (GlcNAc...) asparagine glycan is linked to Asn-1553. 5 cysteine pairs are disulfide-bonded: Cys-1565–Cys-1583, Cys-1622–Cys-1649, Cys-1677–Cys-1699, Cys-1740–Cys-1766, and Cys-1793–Cys-1814. The N-linked (GlcNAc...) asparagine glycan is linked to Asn-1648. N-linked (GlcNAc...) asparagine glycans are attached at residues Asn-1804, Asn-1821, and Asn-1887. 3 disulfides stabilise this stretch: Cys-1907–Cys-1929, Cys-1980–Cys-2008, and Cys-2034–Cys-2056. Asn-2087 and Asn-2119 each carry an N-linked (GlcNAc...) asparagine glycan. 2 cysteine pairs are disulfide-bonded: Cys-2094-Cys-2120 and Cys-2219-Cys-2249. Residue Asn-2276 is glycosylated (N-linked (GlcNAc...) asparagine). 2 disulfides stabilise this stretch: Cys-2277–Cys-2299 and Cys-2338–Cys-2365. 2 N-linked (GlcNAc...) asparagine glycosylation sites follow: Asn-2388 and Asn-2402. 3 disulfides stabilise this stretch: Cys-2392–Cys-2413, Cys-2454–Cys-2480, and Cys-2507–Cys-2529. Asn-2533, Asn-2583, Asn-2594, and Asn-2612 each carry an N-linked (GlcNAc...) asparagine glycan. An intrachain disulfide couples Cys-2572 to Cys-2601. 5 disulfide bridges follow: Cys-2630/Cys-2651, Cys-2691/Cys-2717, Cys-2744/Cys-2766, Cys-2807/Cys-2833, and Cys-2862/Cys-2885. Residues Asn-2887, Asn-2925, Asn-2928, and Asn-2947 are each glycosylated (N-linked (GlcNAc...) asparagine). Disulfide bonds link Cys-2922/Cys-2948 and Cys-2979/Cys-3001. The residue at position 3010 (Thr-3010) is a Phosphothreonine. Intrachain disulfides connect Cys-3039-Cys-3066 and Cys-3093-Cys-3115. N-linked (GlcNAc...) asparagine glycosylation is found at Asn-3044, Asn-3105, and Asn-3127. Disulfide bonds link Cys-3159–Cys-3187 and Cys-3217–Cys-3239. N-linked (GlcNAc...) asparagine glycans are attached at residues Asn-3270 and Asn-3285. 2 disulfides stabilise this stretch: Cys-3280-Cys-3308 and Cys-3334-Cys-3356. Residue Asn-3359 is glycosylated (N-linked (GlcNAc...) asparagine). Cys-3397 and Cys-3423 are disulfide-bonded. 3 N-linked (GlcNAc...) asparagine glycosylation sites follow: Asn-3432, Asn-3459, and Asn-3535. Disulfide bonds link Cys-3450-Cys-3472, Cys-3513-Cys-3539, and Cys-3566-Cys-3588.

Interacts with AMN. Component of the cubam complex composed of one CUBN trimer and one AMN chain. The cubam complex can dimerize. Interacts with LRP2 in a dual-receptor complex in a calcium-dependent manner. Found in a complex with PID1/PCLI1, LRP1 and CUBNI. Interacts with LRP1 and PID1/PCLI1. The precursor is cleaved by a trans-Golgi proteinase furin, removing a propeptide. Post-translationally, N-glycosylated. In terms of tissue distribution, detected in kidney cortex (at protein level).

It localises to the apical cell membrane. The protein resides in the cell membrane. The protein localises to the membrane. Its subcellular location is the coated pit. It is found in the endosome. It localises to the lysosome membrane. Endocytic receptor which plays a role in lipoprotein, vitamin and iron metabolism by facilitating their uptake. Acts together with LRP2 to mediate endocytosis of high-density lipoproteins, GC, hemoglobin, ALB, TF and SCGB1A1. Acts together with AMN to mediate endocytosis of the CBLIF-cobalamin complex. Binds to ALB, MB, Kappa and lambda-light chains, TF, hemoglobin, GC, SCGB1A1, APOA1, high density lipoprotein, and the CBLIF-cobalamin complex. Ligand binding requires calcium. Serves as important transporter in several absorptive epithelia, including intestine, renal proximal tubules and embryonic yolk sac. May play an important role in the development of the peri-implantation embryo through internalization of APOA1 and cholesterol. Binds to LGALS3 at the maternal-fetal interface. The sequence is that of Cubilin (CUBN) from Sus scrofa (Pig).